We begin with the raw amino-acid sequence, 227 residues long: Urease accessory protein UreF 2 (227 aa).

The protein belongs to the UreF family. As to quaternary structure, ureD, UreF and UreG form a complex that acts as a GTP-hydrolysis-dependent molecular chaperone, activating the urease apoprotein by helping to assemble the nickel containing metallocenter of UreC. The UreE protein probably delivers the nickel.

It localises to the cytoplasm. Functionally, required for maturation of urease via the functional incorporation of the urease nickel metallocenter. This chain is Urease accessory protein UreF 2, found in Brucella anthropi (strain ATCC 49188 / DSM 6882 / CCUG 24695 / JCM 21032 / LMG 3331 / NBRC 15819 / NCTC 12168 / Alc 37) (Ochrobactrum anthropi).